Consider the following 433-residue polypeptide: MTAIVEPTWEERRTPEAAHEDDARSQYRKDYSRIIHSAALRRLQTKTQVLGLGDSDFYRTRLTHSLEVAQIGVGILLEIQRRFAGSNIEKYLPDERLLEAICLSHDYGHPPFGHGGERALNFAMREYGGFEGNAQTFRILSKLEKYSQNSGLNPTRRTLLGVLKYPTTYSNSMTNDFRRGTDIDKYPDAELKPPKCIYDCDLDVLDWVLKIFCSEDVTEFKKLDYKCKPLHKSLDCSLMETADDIAYTVHDLEDCIKLKLINREMWDAYIKSADYSEATRLEIEKWNQRIFSKEGNLVKQGISNMVYFFIHSVIQYEHEELSHPILKYGFKLGEEAARLRSAIQKIITNEVIKTHRVRVLESKGQRMIFSIFGELVRDPESFLPRETLDKYNKATGNLRMRVICDYVSGMTDEYATKTYQRFFTPKFGSVFDV.

The HD domain maps to 61–248; it reads RLTHSLEVAQ…METADDIAYT (188 aa).

This sequence belongs to the dGTPase family. Type 2 subfamily.

The polypeptide is Deoxyguanosinetriphosphate triphosphohydrolase-like protein 2 (Deinococcus radiodurans (strain ATCC 13939 / DSM 20539 / JCM 16871 / CCUG 27074 / LMG 4051 / NBRC 15346 / NCIMB 9279 / VKM B-1422 / R1)).